Reading from the N-terminus, the 168-residue chain is 2-C-methyl-D-erythritol 2,4-cyclodiphosphate synthase (168 aa).

The a divalent metal cation site is built by aspartate 8 and histidine 10. 4-CDP-2-C-methyl-D-erythritol 2-phosphate contacts are provided by residues 8–10 (DLH) and 34–35 (HS). Histidine 42 serves as a coordination point for a divalent metal cation. 4-CDP-2-C-methyl-D-erythritol 2-phosphate contacts are provided by residues 56–58 (DIG), 61–65 (FPDTD), 132–135 (TTTE), and arginine 142.

The protein belongs to the IspF family. Homotrimer. Requires a divalent metal cation as cofactor.

The enzyme catalyses 4-CDP-2-C-methyl-D-erythritol 2-phosphate = 2-C-methyl-D-erythritol 2,4-cyclic diphosphate + CMP. It participates in isoprenoid biosynthesis; isopentenyl diphosphate biosynthesis via DXP pathway; isopentenyl diphosphate from 1-deoxy-D-xylulose 5-phosphate: step 4/6. Its function is as follows. Involved in the biosynthesis of isopentenyl diphosphate (IPP) and dimethylallyl diphosphate (DMAPP), two major building blocks of isoprenoid compounds. Catalyzes the conversion of 4-diphosphocytidyl-2-C-methyl-D-erythritol 2-phosphate (CDP-ME2P) to 2-C-methyl-D-erythritol 2,4-cyclodiphosphate (ME-CPP) with a corresponding release of cytidine 5-monophosphate (CMP). The sequence is that of 2-C-methyl-D-erythritol 2,4-cyclodiphosphate synthase from Desulfosudis oleivorans (strain DSM 6200 / JCM 39069 / Hxd3) (Desulfococcus oleovorans).